The following is a 254-amino-acid chain: Decaprenylphosphoryl-2-keto-beta-D-erythro-pentose reductase (254 aa).

Aspartate 67 contributes to the NAD(+) binding site. Tyrosine 160 acts as the Proton acceptor in catalysis. Lysine 164 lines the NAD(+) pocket.

This sequence belongs to the short-chain dehydrogenases/reductases (SDR) family. As to quaternary structure, interacts with DprE1 to form an epimerase complex.

It is found in the periplasm. It catalyses the reaction trans,octa-cis-decaprenylphospho-beta-D-arabinofuranose + NAD(+) = trans,octa-cis-decaprenylphospho-beta-D-erythro-pentofuranosid-2-ulose + NADH + H(+). Its pathway is cell wall biogenesis; cell wall polysaccharide biosynthesis. Component of the DprE1-DprE2 complex that catalyzes the 2-step epimerization of decaprenyl-phospho-ribose (DPR) to decaprenyl-phospho-arabinose (DPA), a key precursor that serves as the arabinose donor required for the synthesis of cell-wall arabinans. DprE1 catalyzes the first step of epimerization, namely FAD-dependent oxidation of the C2' hydroxyl of DPR to yield the keto intermediate decaprenyl-phospho-2'-keto-D-arabinose (DPX). The intermediate DPX is then transferred to DprE2 subunit of the epimerase complex, most probably through a 'substrate channel' at the interface of DprE1-DprE2 complex. DprE2 then catalyzes the second step of epimerization, the NAD(+)-dependent reduction of DPX that leads to the formation of DPA. The sequence is that of Decaprenylphosphoryl-2-keto-beta-D-erythro-pentose reductase from Mycobacterium bovis (strain ATCC BAA-935 / AF2122/97).